A 37-amino-acid chain; its full sequence is Mating pheromone Er-22 (37 aa).

Cystine bridges form between C3-C18, C10-C32, and C15-C24.

It localises to the secreted. Functionally, mating ciliate pheromones (or gamones) are diffusible extracellular communication signals that distinguish different intraspecific classes of cells commonly referred to as 'mating types'. They prepare the latter for conjugation by changing their cell surface properties. In Euplotes raikovi, this protein is Mating pheromone Er-22 (MAT22).